A 436-amino-acid polypeptide reads, in one-letter code: ATP-dependent protease ATPase subunit HslU (436 aa).

ATP contacts are provided by residues Val18, 60-65, Asp249, Glu314, and Arg386; that span reads GVGKTE.

This sequence belongs to the ClpX chaperone family. HslU subfamily. A double ring-shaped homohexamer of HslV is capped on each side by a ring-shaped HslU homohexamer. The assembly of the HslU/HslV complex is dependent on binding of ATP.

It is found in the cytoplasm. In terms of biological role, ATPase subunit of a proteasome-like degradation complex; this subunit has chaperone activity. The binding of ATP and its subsequent hydrolysis by HslU are essential for unfolding of protein substrates subsequently hydrolyzed by HslV. HslU recognizes the N-terminal part of its protein substrates and unfolds these before they are guided to HslV for hydrolysis. The protein is ATP-dependent protease ATPase subunit HslU of Rhizobium rhizogenes (strain K84 / ATCC BAA-868) (Agrobacterium radiobacter).